A 1534-amino-acid polypeptide reads, in one-letter code: DNA-directed RNA polymerase subunit beta'' (1534 aa).

Zn(2+)-binding residues include C220, C296, C303, and C306. 2 stretches are compositionally biased toward basic and acidic residues: residues 644 to 668 and 678 to 688; these read RTQE…RTRE and PENKYRTREGE. Disordered stretches follow at residues 644 to 698 and 719 to 800; these read RTQE…EDEY and YRTL…KKEG. Acidic residues-rich tracts occupy residues 744–762 and 770–789; these read GEYE…SSED and TLEE…EYGS.

Belongs to the RNA polymerase beta' chain family. RpoC2 subfamily. In terms of assembly, in plastids the minimal PEP RNA polymerase catalytic core is composed of four subunits: alpha, beta, beta', and beta''. When a (nuclear-encoded) sigma factor is associated with the core the holoenzyme is formed, which can initiate transcription. Zn(2+) is required as a cofactor.

Its subcellular location is the plastid. It localises to the chloroplast. The enzyme catalyses RNA(n) + a ribonucleoside 5'-triphosphate = RNA(n+1) + diphosphate. Functionally, DNA-dependent RNA polymerase catalyzes the transcription of DNA into RNA using the four ribonucleoside triphosphates as substrates. In Saccharum officinarum (Sugarcane), this protein is DNA-directed RNA polymerase subunit beta''.